A 497-amino-acid polypeptide reads, in one-letter code: Paired box protein Pax-2-A (497 aa).

The paired DNA-binding region spans 16 to 142 (GHGGVNQLGG…SSINRIIRTK (127 aa)). Residues 19 to 75 (GVNQLGGVFVNGRPLPDVVRQRIVELAHQGVRPCDISRQLRVSHGCVSKILGRYYET) form a PAI subdomain region. Positions 94-142 (KVVDKIAEYKRQNPTMFAWEIRDRLLAEGICDNDTVPSVSSINRIIRTK) are RED subdomain. Residues 143 to 224 (VQQPFHPTPD…GDSQSSVESL (82 aa)) form a disordered region. The span at 166–178 (VPSTASPPVSSAS) shows a compositional bias: low complexity.

Expression becomes spatially localized at mid-gastrula stages and is confined to the nervous system (midbrain, hindbrain, spinal cord), sensory organs (optic vesicle and stalk, otic vesicle), visceral arches, developing excretory system (pronephros, pronephric duct, rectal diverticulum, proctodaeum) and thyroid gland. Splicing does not appear to be tissue-specific and tissues displayed the same spectrum of splice variants.

The protein localises to the nucleus. In terms of biological role, probable transcription factor. Involved in kidney development, acting synergistically with lhx1/lim-1 in pronephric morphogenesis during the tailbud stages. This Xenopus laevis (African clawed frog) protein is Paired box protein Pax-2-A (pax2-a).